A 96-amino-acid polypeptide reads, in one-letter code: Cobalt transport protein CbiN (96 aa).

2 consecutive transmembrane segments (helical) span residues 4–24 (WLAAGGILLGALVVFSFVSAG) and 59–79 (IESLLFSIQAAVGGIIIGYYL).

Belongs to the CbiN family. As to quaternary structure, forms an energy-coupling factor (ECF) transporter complex composed of an ATP-binding protein (A component, CbiO), a transmembrane protein (T component, CbiQ) and 2 possible substrate-capture proteins (S components, CbiM and CbiN) of unknown stoichimetry.

The protein resides in the cell membrane. It participates in cofactor biosynthesis; adenosylcobalamin biosynthesis. Functionally, part of the energy-coupling factor (ECF) transporter complex CbiMNOQ involved in cobalt import. The chain is Cobalt transport protein CbiN from Halobacterium salinarum (strain ATCC 29341 / DSM 671 / R1).